Reading from the N-terminus, the 93-residue chain is RNA-binding protein Hfq (93 aa).

The Sm domain maps to 9 to 68 (DPYLNALRRERIPVSIYLVNGIKLQGQIESFDQFVILLKNTVSQMVYKHAISTVVPARAI). Low complexity predominate over residues 70 to 81 (HNNNSNHAHQAA). Positions 70 to 93 (HNNNSNHAHQAAPVQSAEVVEKVE) are disordered.

This sequence belongs to the Hfq family. In terms of assembly, homohexamer.

RNA chaperone that binds small regulatory RNA (sRNAs) and mRNAs to facilitate mRNA translational regulation in response to envelope stress, environmental stress and changes in metabolite concentrations. Also binds with high specificity to tRNAs. The chain is RNA-binding protein Hfq from Glaesserella parasuis serovar 5 (strain SH0165) (Haemophilus parasuis).